Here is a 128-residue protein sequence, read N- to C-terminus: Ribonuclease P protein component (128 aa).

It belongs to the RnpA family. In terms of assembly, consists of a catalytic RNA component (M1 or rnpB) and a protein subunit.

The catalysed reaction is Endonucleolytic cleavage of RNA, removing 5'-extranucleotides from tRNA precursor.. Functionally, RNaseP catalyzes the removal of the 5'-leader sequence from pre-tRNA to produce the mature 5'-terminus. It can also cleave other RNA substrates such as 4.5S RNA. The protein component plays an auxiliary but essential role in vivo by binding to the 5'-leader sequence and broadening the substrate specificity of the ribozyme. The sequence is that of Ribonuclease P protein component from Prochlorococcus marinus (strain AS9601).